A 74-amino-acid polypeptide reads, in one-letter code: Large ribosomal subunit protein bL31 (74 aa).

This sequence belongs to the bacterial ribosomal protein bL31 family. Type A subfamily. In terms of assembly, part of the 50S ribosomal subunit.

In terms of biological role, binds the 23S rRNA. The sequence is that of Large ribosomal subunit protein bL31 from Phenylobacterium zucineum (strain HLK1).